Reading from the N-terminus, the 307-residue chain is Nicotinamide/nicotinic acid mononucleotide adenylyltransferase 2 (307 aa).

Residues Ser-16 and Phe-17 each contribute to the NAD(+) site. Residue His-24 participates in ATP binding. Trp-92, Thr-95, Gly-200, Asp-202, Leu-212, Trp-213, and Arg-232 together coordinate NAD(+). Residue 271–274 (TKSR) participates in ATP binding.

It belongs to the eukaryotic NMN adenylyltransferase family. In terms of assembly, monomer. It depends on Mg(2+) as a cofactor.

The protein localises to the golgi apparatus membrane. Its subcellular location is the cytoplasmic vesicle membrane. It localises to the cytoplasm. It is found in the cell projection. The protein resides in the axon. The enzyme catalyses beta-nicotinamide D-ribonucleotide + ATP + H(+) = diphosphate + NAD(+). The catalysed reaction is nicotinate beta-D-ribonucleotide + ATP + H(+) = deamido-NAD(+) + diphosphate. It functions in the pathway cofactor biosynthesis; NAD(+) biosynthesis; NAD(+) from nicotinamide D-ribonucleotide: step 1/1. Its pathway is cofactor biosynthesis; NAD(+) biosynthesis; deamido-NAD(+) from nicotinate D-ribonucleotide: step 1/1. Its function is as follows. Nicotinamide/nicotinate-nucleotide adenylyltransferase that acts as an axon maintenance factor. Axon survival factor required for the maintenance of healthy axons: acts by delaying Wallerian axon degeneration, an evolutionarily conserved process that drives the loss of damaged axons. Catalyzes the formation of NAD(+) from nicotinamide mononucleotide (NMN) and ATP. Can also use the deamidated form; nicotinic acid mononucleotide (NaMN) as substrate but with a lower efficiency. Also catalyzes the reverse reaction, i.e. the pyrophosphorolytic cleavage of NAD(+). For the pyrophosphorolytic activity prefers NAD(+), NADH and NaAD as substrates and degrades nicotinic acid adenine dinucleotide phosphate (NHD) less effectively. Also acts as an activator of ADP-ribosylation by supporting the catalytic activity of PARP16 and promoting mono-ADP-ribosylation of ribosomes by PARP16. May be involved in the maintenance of axonal integrity. The sequence is that of Nicotinamide/nicotinic acid mononucleotide adenylyltransferase 2 (nmnat2) from Xenopus tropicalis (Western clawed frog).